The primary structure comprises 462 residues: ATP synthase subunit beta (462 aa).

152 to 159 (GGAGVGKT) provides a ligand contact to ATP.

The protein belongs to the ATPase alpha/beta chains family. As to quaternary structure, F-type ATPases have 2 components, CF(1) - the catalytic core - and CF(0) - the membrane proton channel. CF(1) has five subunits: alpha(3), beta(3), gamma(1), delta(1), epsilon(1). CF(0) has three main subunits: a(1), b(2) and c(9-12). The alpha and beta chains form an alternating ring which encloses part of the gamma chain. CF(1) is attached to CF(0) by a central stalk formed by the gamma and epsilon chains, while a peripheral stalk is formed by the delta and b chains.

It localises to the cell inner membrane. The enzyme catalyses ATP + H2O + 4 H(+)(in) = ADP + phosphate + 5 H(+)(out). Produces ATP from ADP in the presence of a proton gradient across the membrane. The catalytic sites are hosted primarily by the beta subunits. The protein is ATP synthase subunit beta of Tolumonas auensis (strain DSM 9187 / NBRC 110442 / TA 4).